We begin with the raw amino-acid sequence, 76 residues long: U-scoloptoxin(13)-Sa1a (76 aa).

Positions Met1–Ala22 are cleaved as a signal peptide.

The protein belongs to the scoloptoxin-13 family. Post-translationally, contains 4 disulfide bonds. Expressed by the venom gland.

Its subcellular location is the secreted. The sequence is that of U-scoloptoxin(13)-Sa1a from Scolopendra alternans (Florida Keys giant centipede).